We begin with the raw amino-acid sequence, 24 residues long: Coenzyme PQQ synthesis protein A (24 aa).

Positions 16–20 form a cross-link, pyrroloquinoline quinone (Glu-Tyr); the sequence is EVTMY.

It belongs to the PqqA family.

The protein operates within cofactor biosynthesis; pyrroloquinoline quinone biosynthesis. Required for coenzyme pyrroloquinoline quinone (PQQ) biosynthesis. PQQ is probably formed by cross-linking a specific glutamate to a specific tyrosine residue and excising these residues from the peptide. The chain is Coenzyme PQQ synthesis protein A from Pseudomonas fluorescens (strain Pf0-1).